The sequence spans 59 residues: Cecropin-A1 (59 aa).

The N-terminal stretch at 1–23 (MNFTKLFAIVLLAALVLLGQTEA) is a signal peptide.

Belongs to the cecropin family.

Its subcellular location is the secreted. Cecropins have lytic and antibacterial activity against several Gram-positive and Gram-negative bacteria. This is Cecropin-A1 (CECA1) from Aedes albopictus (Asian tiger mosquito).